Here is a 134-residue protein sequence, read N- to C-terminus: Thioredoxin H2-2 (134 aa).

Residues Met1–Asp20 form a disordered region. The 128-residue stretch at Ser3 to Ser130 folds into the Thioredoxin domain. Residues Cys56 and Cys59 each act as nucleophile in the active site. Cys56 and Cys59 are joined by a disulfide.

The protein belongs to the thioredoxin family. Plant H-type subfamily.

Its subcellular location is the cytoplasm. Its function is as follows. Probable thiol-disulfide oxidoreductase that may be involved in the redox regulation of a number of cytosolic enzymes. The polypeptide is Thioredoxin H2-2 (Oryza sativa subsp. japonica (Rice)).